The chain runs to 315 residues: Acetyl-coenzyme A carboxylase carboxyl transferase subunit alpha (315 aa).

Positions 35–289 (KLSKKRFELM…RKAVAAELKI (255 aa)) constitute a CoA carboxyltransferase C-terminal domain.

It belongs to the AccA family. In terms of assembly, acetyl-CoA carboxylase is a heterohexamer composed of biotin carboxyl carrier protein (AccB), biotin carboxylase (AccC) and two subunits each of ACCase subunit alpha (AccA) and ACCase subunit beta (AccD).

Its subcellular location is the cytoplasm. The catalysed reaction is N(6)-carboxybiotinyl-L-lysyl-[protein] + acetyl-CoA = N(6)-biotinyl-L-lysyl-[protein] + malonyl-CoA. The protein operates within lipid metabolism; malonyl-CoA biosynthesis; malonyl-CoA from acetyl-CoA: step 1/1. Functionally, component of the acetyl coenzyme A carboxylase (ACC) complex. First, biotin carboxylase catalyzes the carboxylation of biotin on its carrier protein (BCCP) and then the CO(2) group is transferred by the carboxyltransferase to acetyl-CoA to form malonyl-CoA. The sequence is that of Acetyl-coenzyme A carboxylase carboxyl transferase subunit alpha from Francisella tularensis subsp. mediasiatica (strain FSC147).